The following is a 142-amino-acid chain: Hemoglobin subunit alpha (142 aa).

One can recognise a Globin domain in the interval 2-142 (VLSPADKTNV…VSTVLTSKYR (141 aa)). Serine 4 bears the Phosphoserine mark. Lysine 8 carries the post-translational modification N6-succinyllysine. Threonine 9 is subject to Phosphothreonine. Lysine 12 is modified (N6-succinyllysine). Lysine 17 carries the post-translational modification N6-acetyllysine; alternate. The residue at position 17 (lysine 17) is an N6-succinyllysine; alternate. Tyrosine 25 is subject to Phosphotyrosine. The residue at position 36 (serine 36) is a Phosphoserine. An N6-succinyllysine modification is found at lysine 41. Serine 50 carries the post-translational modification Phosphoserine. Histidine 59 is an O2 binding site. Heme b is bound at residue histidine 88. Serine 103 carries the post-translational modification Phosphoserine. Threonine 109 is subject to Phosphothreonine. Serine 125 is modified (phosphoserine). Residues threonine 135 and threonine 138 each carry the phosphothreonine modification. Serine 139 carries the post-translational modification Phosphoserine.

This sequence belongs to the globin family. Heterotetramer of two alpha chains and two beta chains. As to expression, red blood cells.

In terms of biological role, involved in oxygen transport from the lung to the various peripheral tissues. Functionally, hemopressin acts as an antagonist peptide of the cannabinoid receptor CNR1. Hemopressin-binding efficiently blocks cannabinoid receptor CNR1 and subsequent signaling. The protein is Hemoglobin subunit alpha (HBA) of Ailurus fulgens (Himalayan red panda).